The sequence spans 94 residues: Cell division topological specificity factor (94 aa).

The protein belongs to the MinE family.

Functionally, prevents the cell division inhibition by proteins MinC and MinD at internal division sites while permitting inhibition at polar sites. This ensures cell division at the proper site by restricting the formation of a division septum at the midpoint of the long axis of the cell. The sequence is that of Cell division topological specificity factor from Synechococcus sp. (strain CC9311).